The sequence spans 86 residues: UPF0213 protein OB0043 (86 aa).

Residues 3-80 (EQHYVYILRC…LPRFEKLKLI (78 aa)) form the GIY-YIG domain.

The protein belongs to the UPF0213 family.

In Oceanobacillus iheyensis (strain DSM 14371 / CIP 107618 / JCM 11309 / KCTC 3954 / HTE831), this protein is UPF0213 protein OB0043.